We begin with the raw amino-acid sequence, 340 residues long: tRNA N6-adenosine threonylcarbamoyltransferase (340 aa).

2 residues coordinate Fe cation: histidine 115 and histidine 119. Residues 138-142 (VVSGG), aspartate 171, glycine 184, aspartate 188, and asparagine 278 each bind substrate. Position 306 (aspartate 306) interacts with Fe cation.

This sequence belongs to the KAE1 / TsaD family. Fe(2+) serves as cofactor.

It localises to the cytoplasm. It carries out the reaction L-threonylcarbamoyladenylate + adenosine(37) in tRNA = N(6)-L-threonylcarbamoyladenosine(37) in tRNA + AMP + H(+). Functionally, required for the formation of a threonylcarbamoyl group on adenosine at position 37 (t(6)A37) in tRNAs that read codons beginning with adenine. Is involved in the transfer of the threonylcarbamoyl moiety of threonylcarbamoyl-AMP (TC-AMP) to the N6 group of A37, together with TsaE and TsaB. TsaD likely plays a direct catalytic role in this reaction. This is tRNA N6-adenosine threonylcarbamoyltransferase from Clostridium botulinum (strain Hall / ATCC 3502 / NCTC 13319 / Type A).